Here is a 376-residue protein sequence, read N- to C-terminus: UDP-N-acetylglucosamine 2-epimerase (376 aa).

Residues R10, K15, D95, E117, H213, Q271, F276, 290–292 (SGG), E296, and R313 contribute to the substrate site.

It belongs to the UDP-N-acetylglucosamine 2-epimerase family. In terms of assembly, homodimer.

It is found in the cytoplasm. The catalysed reaction is UDP-N-acetyl-alpha-D-glucosamine = UDP-N-acetyl-alpha-D-mannosamine. The protein operates within bacterial outer membrane biogenesis; enterobacterial common antigen biosynthesis. Functionally, catalyzes the reversible epimerization at C-2 of UDP-N-acetylglucosamine (UDP-GlcNAc) and thereby provides bacteria with UDP-N-acetylmannosamine (UDP-ManNAc), the activated donor of ManNAc residues. The protein is UDP-N-acetylglucosamine 2-epimerase of Escherichia coli O157:H7.